A 123-amino-acid chain; its full sequence is Anti-lipopolysaccharide factor (123 aa).

An N-terminal signal peptide occupies residues 1–26; sequence MRKGVVAGLCLALVVMCLYLPQPCEA. Asn-45 carries an N-linked (GlcNAc...) asparagine glycan. A disulfide bridge connects residues Cys-55 and Cys-76.

As to expression, isoform 1 is highly expressed in muscle and stomach, moderately in heart and gill and at lower levels in hemocytes and hepatopancreas. Isoform 2 is mainly expressed in gill, hepatopancreas, muscle and eyestalk.

It is found in the secreted. May bind to bacterial LPS and thus specifically inhibit the LPS-mediated activation of the hemolymph coagulation. It has a strong antibacterial effect especially on the growth of Gram-negative bacteria. This chain is Anti-lipopolysaccharide factor, found in Portunus trituberculatus (Swimming crab).